Reading from the N-terminus, the 331-residue chain is Smad-related protein daf-14 (331 aa).

One can recognise an MH2 domain in the interval 134 to 331; it reads WCTIFYYELT…NERPEIGSRS (198 aa). The tract at residues 168–187 is disordered; it reads ECRMSLTSQPSSRNSKSSQI. The segment covering 175-185 has biased composition (low complexity); sequence SQPSSRNSKSS.

As to quaternary structure, interacts with R-SMAD daf-8 and co-SMAD daf-3. Interacts with daf-3 in a daf-8 dependent manner.

In terms of biological role, probably an atypical receptor-regulated SMAD (R-SMAD) that is an intracellular signal transducer and transcriptional modulator activated by TGF-beta-like daf-7 signaling. Plays a role in TGF-beta-like daf-7 signaling in regulating entry into a developmentally arrested larval state known as dauer, in response to harsh environmental conditions; partially redundant with R-SMAD daf-8. The chain is Smad-related protein daf-14 from Caenorhabditis elegans.